Consider the following 391-residue polypeptide: S-adenosylmethionine synthase 1 (391 aa).

Glu-9 provides a ligand contact to Mg(2+). An ATP-binding site is contributed by His-15. Residue Glu-43 coordinates K(+). L-methionine is bound by residues Glu-56 and Gln-99. ATP-binding positions include 167–169, 235–238, Asp-246, 252–253, Ala-269, Lys-273, and Lys-277; these read DGK, SGRF, and RK. Asp-246 contacts L-methionine. Lys-277 contributes to the L-methionine binding site.

It belongs to the AdoMet synthase family. As to quaternary structure, homotetramer. Mn(2+) serves as cofactor. Mg(2+) is required as a cofactor. Requires Co(2+) as cofactor. The cofactor is K(+).

It is found in the cytoplasm. The catalysed reaction is L-methionine + ATP + H2O = S-adenosyl-L-methionine + phosphate + diphosphate. Its pathway is amino-acid biosynthesis; S-adenosyl-L-methionine biosynthesis; S-adenosyl-L-methionine from L-methionine: step 1/1. In terms of biological role, catalyzes the formation of S-adenosylmethionine from methionine and ATP. The reaction comprises two steps that are both catalyzed by the same enzyme: formation of S-adenosylmethionine (AdoMet) and triphosphate, and subsequent hydrolysis of the triphosphate. This chain is S-adenosylmethionine synthase 1 (METK1), found in Vitis vinifera (Grape).